Consider the following 322-residue polypeptide: Putative pyruvyl transferase EpsO (322 aa).

Belongs to the polysaccharide pyruvyl transferase family.

May be involved in the production of the exopolysaccharide (EPS) component of the extracellular matrix during biofilm formation. EPS is responsible for the adhesion of chains of cells into bundles. This chain is Putative pyruvyl transferase EpsO (epsO), found in Bacillus subtilis (strain 168).